The sequence spans 152 residues: UPF0266 membrane protein YobD (152 aa).

A run of 3 helical transmembrane segments spans residues 6–26, 45–65, and 67–87; these read LVLILFIAALLAYALYDQFIM, VDSVIFVGLVAILIYNNVTSH, and AQMTTWLLSALALMGFYIFWI.

This sequence belongs to the UPF0266 family.

The protein localises to the cell inner membrane. This Salmonella agona (strain SL483) protein is UPF0266 membrane protein YobD.